The following is a 354-amino-acid chain: Protein-arginine kinase (354 aa).

In terms of domain architecture, Phosphagen kinase C-terminal spans 24-254 (IVLSSRIRLA…QQIIQQEKMA (231 aa)). ATP contacts are provided by residues 27–31 (SSRIR), His-92, Arg-125, 176–180 (RASVM), and 207–212 (RGIYGE). Residues 337–342 (RDYRRA) carry the RDXXRA motif of the pArg binding pocket involved in allosteric regulation motif.

It belongs to the ATP:guanido phosphotransferase family.

It catalyses the reaction L-arginyl-[protein] + ATP = N(omega)-phospho-L-arginyl-[protein] + ADP + H(+). With respect to regulation, appears to be allosterically activated by the binding of pArg-containing polypeptides to the pArg-binding pocket localized in the C-terminal domain of McsB. In terms of biological role, catalyzes the specific phosphorylation of arginine residues in a large number of proteins. Is part of the bacterial stress response system. Protein arginine phosphorylation has a physiologically important role and is involved in the regulation of many critical cellular processes, such as protein homeostasis, motility, competence, and stringent and stress responses, by regulating gene expression and protein activity. This chain is Protein-arginine kinase, found in Bacillus thuringiensis subsp. konkukian (strain 97-27).